The chain runs to 829 residues: Periplasmic nitrate reductase (829 aa).

Residues 1-29 constitute a signal peptide (tat-type signal); that stretch reads MKMTRRAFVKANAAASAAAVAGVTLPATA. Residues 41–97 form the 4Fe-4S Mo/W bis-MGD-type domain; sequence ITWDKAPCRFCGTGCSVLVGTQNGKVVATQGDPEAPVNKGLNCIKGYFLSKIMYGKD. The [4Fe-4S] cluster site is built by C48, C51, C55, and C83. Residues K85, Q152, N177, C181, 214-221, 245-249, 264-266, M374, Q378, N484, 510-511, K533, D560, and 718-727 contribute to the Mo-bis(molybdopterin guanine dinucleotide) site; these read WGSNMAEM, STYYH, QSD, SD, and TGRVLEHWHT. Position 794 (F794) interacts with substrate. 2 residues coordinate Mo-bis(molybdopterin guanine dinucleotide): N802 and K819.

The protein belongs to the prokaryotic molybdopterin-containing oxidoreductase family. NasA/NapA/NarB subfamily. In terms of assembly, component of the periplasmic nitrate reductase NapAB complex composed of NapA and NapB. [4Fe-4S] cluster is required as a cofactor. It depends on Mo-bis(molybdopterin guanine dinucleotide) as a cofactor. Post-translationally, predicted to be exported by the Tat system. The position of the signal peptide cleavage has not been experimentally proven.

The protein resides in the periplasm. The catalysed reaction is 2 Fe(II)-[cytochrome] + nitrate + 2 H(+) = 2 Fe(III)-[cytochrome] + nitrite + H2O. Its function is as follows. Catalytic subunit of the periplasmic nitrate reductase complex NapAB. Receives electrons from NapB and catalyzes the reduction of nitrate to nitrite. This chain is Periplasmic nitrate reductase, found in Vibrio atlanticus (strain LGP32) (Vibrio splendidus (strain Mel32)).